The primary structure comprises 156 residues: 6,7-dimethyl-8-ribityllumazine synthase (156 aa).

5-amino-6-(D-ribitylamino)uracil contacts are provided by residues Phe28, 62–64 (ALE), and 86–88 (AVI). (2S)-2-hydroxy-3-oxobutyl phosphate is bound at residue 91–92 (ET). Catalysis depends on His94, which acts as the Proton donor. Residue Asn119 coordinates 5-amino-6-(D-ribitylamino)uracil. Position 133 (Arg133) interacts with (2S)-2-hydroxy-3-oxobutyl phosphate.

It belongs to the DMRL synthase family.

It catalyses the reaction (2S)-2-hydroxy-3-oxobutyl phosphate + 5-amino-6-(D-ribitylamino)uracil = 6,7-dimethyl-8-(1-D-ribityl)lumazine + phosphate + 2 H2O + H(+). It participates in cofactor biosynthesis; riboflavin biosynthesis; riboflavin from 2-hydroxy-3-oxobutyl phosphate and 5-amino-6-(D-ribitylamino)uracil: step 1/2. Its function is as follows. Catalyzes the formation of 6,7-dimethyl-8-ribityllumazine by condensation of 5-amino-6-(D-ribitylamino)uracil with 3,4-dihydroxy-2-butanone 4-phosphate. This is the penultimate step in the biosynthesis of riboflavin. The sequence is that of 6,7-dimethyl-8-ribityllumazine synthase from Azoarcus sp. (strain BH72).